Here is a 303-residue protein sequence, read N- to C-terminus: NmrA-like family domain-containing oxidoreductase FVEG_08287 (303 aa).

Residues 8–13 (LGAGEL), 8–14 (LGAGELG), 36–39 (LRPS), arginine 37, 56–57 (QG), 77–79 (IFR), and 159–162 (FMSF) each bind NADP(+).

This sequence belongs to the NmrA-type oxidoreductase family.

NmrA-like family domain-containing oxidoreductase; part of the Fusarium detoxification of benzoxazolinone cluster 1 (FDB1) involved in the degradation of benzoxazolinones produced by the host plant. Maize, wheat, and rye produce the 2 benzoxazinone phytoanticipins 2,4-dihy-droxy-7-methoxy-1,4-benzoxazin-3-one (DIMBOA) and 2,4-dihydroxy-1,4-benzoxazin-3-one (DIBOA) that, due to their inherent instability once released, spontaneously degrade to the more stable corresponding benzoxazolinones, 6-methoxy-2-benzoxazolinone (MBOA) and 2-benzoxazolinone (BOA), respectively. The first step in the detoxification of benzoxazolinones involves the hydrolysis of the cyclic ester bond of benzoxazolinones by the FDB1 cluster gamma-lactamase MBL1 to aminophenols. MBL1 is able to convert BOA into 2-aminophenol (2-AP), as well as MBOA into 5-methoxy-2-aminophenol (2-AMP). The FDB2 cluster N-malonyltransferase FDB2/NAT1 then metabolizes aminophenols via N-malonylation to non-toxic malonamic acids. FDB2/NAT1 converts 2-AP into N-(2-hydroxyphenyl) malonamic acid (HPMA) and 2-AMP into N-(2-hydroxy-4-methoxyphenyl) malonamic acid (HMPMA). The duplicated dienlactone hydrolases DLH1 and DLH2 may provide redundant function for hydrolyzing the lactone moiety in the BOA molecule. The roles of the amidases an other enzymes encoded by the 2 FDB clusters have not been identified so far. The sequence is that of NmrA-like family domain-containing oxidoreductase FVEG_08287 from Gibberella moniliformis (strain M3125 / FGSC 7600) (Maize ear and stalk rot fungus).